Here is a 347-residue protein sequence, read N- to C-terminus: Very-long-chain 3-oxoacyl-CoA reductase (347 aa).

Residues 20-40 (LLWVVFGLGVLKCTTLSLRFL) traverse the membrane as a helical segment. NADP(+) is bound by residues valine 66, aspartate 120, asparagine 147, tyrosine 223, lysine 227, valine 256, and serine 258. The Proton donor role is filled by tyrosine 223. Lysine 227 functions as the Lowers pKa of active site Tyr in the catalytic mechanism.

This sequence belongs to the short-chain dehydrogenases/reductases (SDR) family. In terms of assembly, interacts with the fatty acid elongation system components ELO3 and TSC13.

It localises to the endoplasmic reticulum membrane. The catalysed reaction is a very-long-chain (3R)-3-hydroxyacyl-CoA + NADP(+) = a very-long-chain 3-oxoacyl-CoA + NADPH + H(+). The protein operates within lipid metabolism; fatty acid biosynthesis. Functionally, component of the microsomal membrane bound fatty acid elongation system, which produces the 26-carbon very long-chain fatty acids (VLCFA) from palmitate. Catalyzes the reduction of the 3-ketoacyl-CoA intermediate that is formed in each cycle of fatty acid elongation. VLCFAs serve as precursors for ceramide and sphingolipids. This is Very-long-chain 3-oxoacyl-CoA reductase from Saccharomyces cerevisiae (strain RM11-1a) (Baker's yeast).